Consider the following 842-residue polypeptide: Netrin receptor UNC5A (842 aa).

The first 25 residues, Met1 to Ala25, serve as a signal peptide directing secretion. Topologically, residues Gln26–Tyr306 are extracellular. An Ig-like domain is found at Pro44–Tyr141. 3 cysteine pairs are disulfide-bonded: Cys65-Cys126, Cys77-Cys124, and Cys170-Cys221. 2 N-linked (GlcNAc...) asparagine glycosylation sites follow: Asn107 and Asn218. The 80-residue stretch at Pro155–Ser234 folds into the Ig-like C2-type domain. Residues Asp242–Val294 form the TSP type-1 domain. 3 C-linked (Man) tryptophan glycosylation sites follow: Trp245, Trp248, and Trp251. 3 cysteine pairs are disulfide-bonded: Cys254-Cys288, Cys258-Cys293, and Cys266-Cys278. Asn287 carries an N-linked (GlcNAc...) asparagine glycan. Residues Val307–Tyr327 form a helical membrane-spanning segment. The Cytoplasmic segment spans residues Cys328–Cys842. A ZU5 domain is found at Asn441–Ala584. Residues Ser605 to Lys623 are interaction with DCC. The region spanning Gln761 to Glu841 is the Death domain.

It belongs to the unc-5 family. Homodimer and homooligomer. Interacts with the cytoplasmic part of DCC. Interacts with MAGED1. Interacts with PRKCABP, possibly mediating some interaction with PKC. Interacts (via extracellular domain) with FLRT2 (via extracellular domain). Interacts (via extracellular domain) with FLRT3 (via extracellular domain). Phosphorylated on cytoplasmic tyrosine residues. Phosphorylated by PKC in vitro. In terms of processing, proteolytically cleaved by caspases during apoptosis. The cleavage does not take place when the receptor is associated with netrin ligand. Its cleavage by caspases is required to induce apoptosis. Post-translationally, the two extracellular TSRs of UNC5A contain WxxWxxWxxC motifs that can be C-mannosylated on all tryptophans. DPY19L1 preferentially mannosylates the first two tryptophans and DPY19L3 prefers the third. C-mannosylation by DPY19L1 is required for transport of UNC5A from the endoplasmic reticulum to the cell surface.

The protein resides in the cell membrane. It is found in the membrane raft. The protein localises to the cell projection. It localises to the neuron projection. Its function is as follows. Receptor for netrin required for axon guidance. Functions in the netrin signaling pathway and promotes neurite outgrowth in response to NTN1. Mediates axon repulsion of neuronal growth cones in the developing nervous system in response to netrin. Axon repulsion in growth cones may be mediated by its association with DCC that may trigger signaling for repulsion. It also acts as a dependence receptor required for apoptosis induction when not associated with netrin ligand. This Homo sapiens (Human) protein is Netrin receptor UNC5A (UNC5A).